Consider the following 358-residue polypeptide: Tetraacyldisaccharide 4'-kinase (358 aa).

Position 71–78 (71–78) interacts with ATP; that stretch reads IAGGAGKT.

The protein belongs to the LpxK family.

It carries out the reaction a lipid A disaccharide + ATP = a lipid IVA + ADP + H(+). It functions in the pathway glycolipid biosynthesis; lipid IV(A) biosynthesis; lipid IV(A) from (3R)-3-hydroxytetradecanoyl-[acyl-carrier-protein] and UDP-N-acetyl-alpha-D-glucosamine: step 6/6. Its function is as follows. Transfers the gamma-phosphate of ATP to the 4'-position of a tetraacyldisaccharide 1-phosphate intermediate (termed DS-1-P) to form tetraacyldisaccharide 1,4'-bis-phosphate (lipid IVA). The protein is Tetraacyldisaccharide 4'-kinase of Methylibium petroleiphilum (strain ATCC BAA-1232 / LMG 22953 / PM1).